The following is a 174-amino-acid chain: Large ribosomal subunit protein uL18 (174 aa).

This sequence belongs to the universal ribosomal protein uL18 family. In terms of assembly, part of the 50S ribosomal subunit. Contacts the 5S and 23S rRNAs.

This is one of the proteins that bind and probably mediate the attachment of the 5S RNA into the large ribosomal subunit, where it forms part of the central protuberance. This is Large ribosomal subunit protein uL18 from Methanoregula boonei (strain DSM 21154 / JCM 14090 / 6A8).